The sequence spans 274 residues: Putative pyruvate, phosphate dikinase regulatory protein (274 aa).

Residue G150 to T157 participates in ADP binding.

The protein belongs to the pyruvate, phosphate/water dikinase regulatory protein family. PDRP subfamily.

It catalyses the reaction N(tele)-phospho-L-histidyl/L-threonyl-[pyruvate, phosphate dikinase] + ADP = N(tele)-phospho-L-histidyl/O-phospho-L-threonyl-[pyruvate, phosphate dikinase] + AMP + H(+). The catalysed reaction is N(tele)-phospho-L-histidyl/O-phospho-L-threonyl-[pyruvate, phosphate dikinase] + phosphate + H(+) = N(tele)-phospho-L-histidyl/L-threonyl-[pyruvate, phosphate dikinase] + diphosphate. In terms of biological role, bifunctional serine/threonine kinase and phosphorylase involved in the regulation of the pyruvate, phosphate dikinase (PPDK) by catalyzing its phosphorylation/dephosphorylation. This Rickettsia peacockii (strain Rustic) protein is Putative pyruvate, phosphate dikinase regulatory protein.